Reading from the N-terminus, the 559-residue chain is Oxygen-dependent choline dehydrogenase (559 aa).

4 to 33 (DYIIIGAGSAGNVLATRLTEESDVSVLLLE) contributes to the FAD binding site. Residues 182-201 (EGFGPMDRTVTPKGRRASTA) form a disordered region. The active-site Proton acceptor is H471.

Belongs to the GMC oxidoreductase family. It depends on FAD as a cofactor.

It catalyses the reaction choline + A = betaine aldehyde + AH2. The enzyme catalyses betaine aldehyde + NAD(+) + H2O = glycine betaine + NADH + 2 H(+). The protein operates within amine and polyamine biosynthesis; betaine biosynthesis via choline pathway; betaine aldehyde from choline (cytochrome c reductase route): step 1/1. In terms of biological role, involved in the biosynthesis of the osmoprotectant glycine betaine. Catalyzes the oxidation of choline to betaine aldehyde and betaine aldehyde to glycine betaine at the same rate. The protein is Oxygen-dependent choline dehydrogenase of Pectobacterium carotovorum subsp. carotovorum (strain PC1).